The following is a 318-amino-acid chain: tRNA-cytidine(32) 2-sulfurtransferase (318 aa).

Residues 65-70 carry the PP-loop motif motif; the sequence is SGGKDS. Residues cysteine 140, cysteine 143, and cysteine 231 each coordinate [4Fe-4S] cluster.

It belongs to the TtcA family. In terms of assembly, homodimer. Mg(2+) serves as cofactor. Requires [4Fe-4S] cluster as cofactor.

The protein localises to the cytoplasm. It carries out the reaction cytidine(32) in tRNA + S-sulfanyl-L-cysteinyl-[cysteine desulfurase] + AH2 + ATP = 2-thiocytidine(32) in tRNA + L-cysteinyl-[cysteine desulfurase] + A + AMP + diphosphate + H(+). It functions in the pathway tRNA modification. Catalyzes the ATP-dependent 2-thiolation of cytidine in position 32 of tRNA, to form 2-thiocytidine (s(2)C32). The sulfur atoms are provided by the cysteine/cysteine desulfurase (IscS) system. The protein is tRNA-cytidine(32) 2-sulfurtransferase of Herminiimonas arsenicoxydans.